The sequence spans 70 residues: DNA-directed RNA polymerase subunit omega (70 aa).

It belongs to the RNA polymerase subunit omega family. In terms of assembly, the RNAP catalytic core consists of 2 alpha, 1 beta, 1 beta' and 1 omega subunit. When a sigma factor is associated with the core the holoenzyme is formed, which can initiate transcription.

It carries out the reaction RNA(n) + a ribonucleoside 5'-triphosphate = RNA(n+1) + diphosphate. In terms of biological role, promotes RNA polymerase assembly. Latches the N- and C-terminal regions of the beta' subunit thereby facilitating its interaction with the beta and alpha subunits. The protein is DNA-directed RNA polymerase subunit omega of Thermoanaerobacter pseudethanolicus (strain ATCC 33223 / 39E) (Clostridium thermohydrosulfuricum).